A 361-amino-acid chain; its full sequence is Adenosine kinase (361 aa).

The Nuclear localization signal motif lies at 7–15; the sequence is PKPKKLKVE. Residue D34 coordinates adenosine. Residue S48 coordinates Mg(2+). Y76 is subject to Phosphotyrosine. 2 residues coordinate Mg(2+): D146 and N147. Q305 serves as a coordination point for adenosine. D316 is a catalytic residue. D316 functions as the Proton acceptor in the catalytic mechanism.

The protein belongs to the carbohydrate kinase PfkB family. Monomer. Mg(2+) serves as cofactor. The N-terminus is blocked.

The protein localises to the nucleus. The enzyme catalyses adenosine + ATP = AMP + ADP + H(+). The protein operates within purine metabolism; AMP biosynthesis via salvage pathway; AMP from adenosine: step 1/1. Activity is inhibited by 5-iodotubercidin and 5'-amino-5'-deoxyadenosine. Functionally, catalyzes the phosphorylation of the purine nucleoside adenosine at the 5' position in an ATP-dependent manner. Serves as a potential regulator of concentrations of extracellular adenosine and intracellular adenine nucleotides. This Cricetulus griseus (Chinese hamster) protein is Adenosine kinase (ADK).